Consider the following 363-residue polypeptide: Cyanuric acid amidohydrolase (363 aa).

The RU A stretch occupies residues 1–104; sequence MYHIDVFRIP…TVFARRPAID (104 aa). Residues arginine 52 and 83 to 84 contribute to the substrate site; that span reads SG. Positions 112–249 are RU B; sequence RLTLGIAFTR…NVVIAIGMSE (138 aa). The active site involves lysine 162. Residues arginine 194 and 232-233 contribute to the substrate site; that span reads SA. The Nucleophile role is filled by serine 232. Residues 255 to 363 form an RU C region; that stretch reads LVIAHGVMSD…GGPFAVIARA (109 aa). A Mg(2+)-binding site is contributed by glutamate 297. Residues arginine 324 and 343–344 contribute to the substrate site; that span reads SG. Positions 346, 349, 350, 351, and 354 each coordinate Mg(2+).

This sequence belongs to the cyclic amide hydrolase (CyAH) family. In terms of assembly, homotetramer.

It catalyses the reaction cyanurate + H2O = 1-carboxybiuret + H(+). Its pathway is xenobiotic degradation; atrazine degradation; biuret from cyanurate: step 1/1. Inhibited by barbituric acid. Responsible for the hydrolysis of cyanuric acid, an intermediate formed during catabolism of s-triazine based compounds in herbicides such as atrazine and polymers such as melamine. Catalyzes the hydrolytic opening of the s-triazine ring of cyanuric acid (2,4,6-trihydroxy-s-triazine) to yield carbon dioxide and carboxybiuret, which spontaneously decarboxylates to biuret. This Pseudomonas sp. (strain ADP) protein is Cyanuric acid amidohydrolase (atzD).